The following is a 274-amino-acid chain: HTH-type transcriptional regulator GadX (274 aa).

Residues 145–242 enclose the HTH araC/xylS-type domain; sequence TRVCTVINNN…GMTPTEYQER (98 aa). 2 consecutive DNA-binding regions (H-T-H motif) follow at residues 162–183 and 209–232; these read ARIA…REEE and IKRV…RNYY.

As to quaternary structure, homodimer.

In terms of biological role, positively regulates the expression of about fifteen genes involved in acid resistance such as gadA, gadB and gadC. Depending on the conditions (growth phase and medium), can repress gadW. In Escherichia coli (strain K12), this protein is HTH-type transcriptional regulator GadX (gadX).